The primary structure comprises 339 residues: Small ribosomal subunit protein mS27 (339 aa).

The transit peptide at 1–37 directs the protein to the mitochondrion; sequence MGTITVVINEGPILLIRALHRATTNKKMFRSTVWRRF.

This sequence belongs to the mitochondrion-specific ribosomal protein mS27 family. In terms of assembly, component of the mitochondrial small ribosomal subunit (mt-SSU). Mature yeast 74S mitochondrial ribosomes consist of a small (37S) and a large (54S) subunit. The 37S small subunit contains a 15S ribosomal RNA (15S mt-rRNA) and 34 different proteins. The 54S large subunit contains a 21S rRNA (21S mt-rRNA) and 46 different proteins.

It is found in the mitochondrion. Component of the mitochondrial ribosome (mitoribosome), a dedicated translation machinery responsible for the synthesis of mitochondrial genome-encoded proteins, including at least some of the essential transmembrane subunits of the mitochondrial respiratory chain. The mitoribosomes are attached to the mitochondrial inner membrane and translation products are cotranslationally integrated into the membrane. The polypeptide is Small ribosomal subunit protein mS27 (MRP13) (Saccharomyces cerevisiae (strain ATCC 204508 / S288c) (Baker's yeast)).